The primary structure comprises 216 residues: Imidazole glycerol phosphate synthase subunit HisH (216 aa).

The 215-residue stretch at 2 to 216 (SIAIIDYGSG…LISNFLRWKP (215 aa)) folds into the Glutamine amidotransferase type-1 domain. C88 serves as the catalytic Nucleophile. Catalysis depends on residues H196 and E198.

As to quaternary structure, heterodimer of HisH and HisF.

The protein localises to the cytoplasm. It catalyses the reaction 5-[(5-phospho-1-deoxy-D-ribulos-1-ylimino)methylamino]-1-(5-phospho-beta-D-ribosyl)imidazole-4-carboxamide + L-glutamine = D-erythro-1-(imidazol-4-yl)glycerol 3-phosphate + 5-amino-1-(5-phospho-beta-D-ribosyl)imidazole-4-carboxamide + L-glutamate + H(+). It carries out the reaction L-glutamine + H2O = L-glutamate + NH4(+). The protein operates within amino-acid biosynthesis; L-histidine biosynthesis; L-histidine from 5-phospho-alpha-D-ribose 1-diphosphate: step 5/9. Functionally, IGPS catalyzes the conversion of PRFAR and glutamine to IGP, AICAR and glutamate. The HisH subunit catalyzes the hydrolysis of glutamine to glutamate and ammonia as part of the synthesis of IGP and AICAR. The resulting ammonia molecule is channeled to the active site of HisF. The sequence is that of Imidazole glycerol phosphate synthase subunit HisH from Bradyrhizobium diazoefficiens (strain JCM 10833 / BCRC 13528 / IAM 13628 / NBRC 14792 / USDA 110).